Here is an 849-residue protein sequence, read N- to C-terminus: Mechanosensitive ion channel protein 7 (849 aa).

Residues 1–49 are disordered; it reads MEFRKPFKSHSSYKQIISTGDQNEKTKKKKKLANLDDGDIAKTQSSGSS. A compositionally biased stretch (polar residues) spans 9-21; it reads SHSSYKQIISTGD. The next 6 membrane-spanning stretches (helical) occupy residues 231–251, 274–294, 313–333, 344–364, 606–626, and 642–662; these read AITLLQWMSLIALVVALVLSL, LVLICGRLVSGCGIRIIVFFI, TAVQNCLWLGLVLLAWHFLFD, VLLLMSKILVCFLLSTVLWLI, MISFLTAIVIIVIWLILLEIA, and AFMFGNSLKTVFESIIFLFII.

This sequence belongs to the MscS (TC 1.A.23) family.

It is found in the membrane. Functionally, mechanosensitive channel that opens in response to stretch forces in the membrane lipid bilayer. In Arabidopsis thaliana (Mouse-ear cress), this protein is Mechanosensitive ion channel protein 7 (MSL7).